We begin with the raw amino-acid sequence, 146 residues long: Hemoglobin subunit beta (146 aa).

Positions 2-146 constitute a Globin domain; the sequence is QWTAEEKQLI…VAHALARKYH (145 aa). Residues H63 and H92 each coordinate heme b.

The protein belongs to the globin family. In terms of assembly, heterotetramer of two alpha chains and two beta chains. As to expression, red blood cells.

Its function is as follows. Involved in oxygen transport from the lung to the various peripheral tissues. The protein is Hemoglobin subunit beta (HBB) of Rhea americana (Greater rhea).